Here is a 302-residue protein sequence, read N- to C-terminus: tRNA dimethylallyltransferase (302 aa).

Position 9–16 (9–16 (GPTGTGKS)) interacts with ATP. 11 to 16 (TGTGKS) provides a ligand contact to substrate.

This sequence belongs to the IPP transferase family. As to quaternary structure, monomer. Requires Mg(2+) as cofactor.

It catalyses the reaction adenosine(37) in tRNA + dimethylallyl diphosphate = N(6)-dimethylallyladenosine(37) in tRNA + diphosphate. In terms of biological role, catalyzes the transfer of a dimethylallyl group onto the adenine at position 37 in tRNAs that read codons beginning with uridine, leading to the formation of N6-(dimethylallyl)adenosine (i(6)A). The chain is tRNA dimethylallyltransferase from Mycolicibacterium smegmatis (strain ATCC 700084 / mc(2)155) (Mycobacterium smegmatis).